The sequence spans 1215 residues: Endoplasmic reticulum transmembrane helix translocase (1215 aa).

Residues 1 to 27 are Cytoplasmic-facing; it reads MTKKSFVSSPIVRDSTLLVPKSLIAKP. The helical transmembrane segment at 28-43 threads the bilayer; it reads YVLPFFPLYATFAQLY. Over 44–56 the chain is Lumenal; the sequence is FQQYDRYIKGPEW. Residues 57–76 traverse the membrane as a helical segment; the sequence is TFVYLGTLVSLNILVMLMPA. Over 77–188 the chain is Cytoplasmic; it reads WNVKIKAKFN…ENSFDIPIPT (112 aa). The tract at residues 156 to 185 is A-domain; part 1; sequence KIGDFQKCKGHSGDLTHLKRLYGENSFDIP. A helical membrane pass occupies residues 189 to 216; sequence FMELFKEHAVAPLFVFQVFCVALWLLDE. A topological domain (lumenal) is located at residue Phe-217. A helical transmembrane segment spans residues 218–246; it reads WYYSLFNLFMIISMEAAAVFQRLTALKEF. Topologically, residues 247 to 395 are cytoplasmic; that stretch reads RTMGIKPYTI…IYSAERVSVD (149 aa). The A-domain; part 2 stretch occupies residues 250-390; that stretch reads GIKPYTINVF…LVRVMIYSAE (141 aa). The residue at position 324 (Ser-324) is a Phosphoserine. Residues 396–425 traverse the membrane as a helical segment; sequence NKEALMFILFLLIFAVIASWYVWVEGTKMG. Residues 426-427 are Lumenal-facing; it reads RI. The next 2 membrane-spanning stretches (helical) occupy residues 428-442 and 446-464; these read QSKL…ITSV and ELPM…ALAK. Residues 465–971 lie on the Cytoplasmic side of the membrane; that stretch reads FYVYCTEPFR…APFTSKLANV (507 aa). Residues 466–495 are P-domain; part 1; the sequence is YVYCTEPFRIPFAGRIDVCCFDKTGTLTGE. The active-site 4-aspartylphosphate intermediate is the Asp-487. Mg(2+) is bound by residues Asp-487 and Thr-489. Residues 487 to 489, Phe-582, Arg-634, Asp-699, and 816 to 820 contribute to the ATP site; these read DKT and DGTND. The interval 497–674 is N-domain; the sequence is LVFEGLAGIS…FNGFLIFHCP (178 aa). The segment at 677 to 837 is P-domain; part 2; sequence DDAIETIKML…HVGIALLNGT (161 aa). Mg(2+) is bound at residue Asp-816. An arm-like region spans residues 838–953; the sequence is EEGLKKLGEQ…DAQGDEAPAL (116 aa). At Ser-936 the chain carries Phosphoserine. The P-domain; part 3 stretch occupies residues 954-969; it reads KLGDASCAAPFTSKLA. Residues 972–1011 form a helical membrane-spanning segment; that stretch reads SAVTNIIRQGRCALVNTIQMYKILALNCLISAYSLSIIYM. The Lumenal segment spans residues 1012 to 1017; sequence AGVKFG. The chain crosses the membrane as a helical span at residues 1018-1035; the sequence is DGQATVSGLLLSVCFLSI. Residues 1036–1055 lie on the Cytoplasmic side of the membrane; sequence SRGKPLEKLSKQRPQSGIFN. The helical transmembrane segment at 1056–1084 threads the bilayer; that stretch reads VYIMGSILSQFAVHIATLVYITTEIYKLE. Residues 1085–1099 lie on the Lumenal side of the membrane; that stretch reads PREPQVDLEKEFAPS. Residues 1100–1121 form a helical membrane-spanning segment; it reads LLNTGIFIIQLVQQVSTFAVNY. The Cytoplasmic segment spans residues 1122 to 1133; sequence QGEPFRENIRSN. The chain crosses the membrane as a helical span at residues 1134-1151; that stretch reads KGMYYGLLGVTGLALASA. Residues 1152-1168 lie on the Lumenal side of the membrane; sequence TEFLPELNEAMKFVPMT. A helical membrane pass occupies residues 1169 to 1197; it reads DDFKIKLTLTLLLDFFGSWGVEHFFKFFF. Over 1198 to 1215 the chain is Cytoplasmic; sequence MDDKPSDISVQQVKIASK.

It belongs to the cation transport ATPase (P-type) (TC 3.A.3) family. Type V subfamily. The cofactor is Mg(2+).

It localises to the endoplasmic reticulum membrane. The catalysed reaction is [protein]-with a C-terminal TM segment(out) + ATP + H2O = [protein]-with a C-terminal TM segment(in) + ADP + phosphate + H(+). With respect to regulation, the ATPase activity is stimulated by phosphatidylinositol 4-phosphate (PI4P). Its function is as follows. Endoplasmic reticulum translocase required to remove mitochondrial transmembrane proteins mistargeted to the endoplasmic reticulum. Acts as a dislocase that mediates the ATP-dependent extraction of mislocalized mitochondrial transmembrane proteins from the endoplasmic reticulum membrane. Specifically binds mitochondrial tail-anchored transmembrane proteins: has an atypically large substrate-binding pocket that recognizes and binds moderately hydrophobic transmembranes with short hydrophilic lumenal domains. This chain is Endoplasmic reticulum transmembrane helix translocase, found in Saccharomyces cerevisiae (strain ATCC 204508 / S288c) (Baker's yeast).